We begin with the raw amino-acid sequence, 122 residues long: Large ribosomal subunit protein uL14c (122 aa).

It belongs to the universal ribosomal protein uL14 family. As to quaternary structure, part of the 50S ribosomal subunit.

Its subcellular location is the plastid. The protein localises to the chloroplast. Functionally, binds to 23S rRNA. In Welwitschia mirabilis (Tree tumbo), this protein is Large ribosomal subunit protein uL14c.